The following is a 99-amino-acid chain: Putative membrane protein insertion efficiency factor (99 aa).

It belongs to the UPF0161 family.

The protein resides in the cell membrane. Its function is as follows. Could be involved in insertion of integral membrane proteins into the membrane. This is Putative membrane protein insertion efficiency factor from Corynebacterium efficiens (strain DSM 44549 / YS-314 / AJ 12310 / JCM 11189 / NBRC 100395).